The following is an 88-amino-acid chain: UPF0237 protein spr0217 (88 aa).

An ACT domain is found at 4–77 (IITVVGKDKS…QTLNVKINIQ (74 aa)).

This sequence belongs to the UPF0237 family. In terms of assembly, homodimer.

The protein is UPF0237 protein spr0217 of Streptococcus pneumoniae (strain ATCC BAA-255 / R6).